A 248-amino-acid chain; its full sequence is Anamorsin homolog (248 aa).

Residues 4–129 (FKGLQKTLYI…ETGSSARLSF (126 aa)) form an N-terminal SAM-like domain region. The segment at 130-161 (AKKDASALNVWKISGDDEELIDEEDLLDEEDK) is linker. The [2Fe-2S] cluster site is built by Cys172, Cys181, Cys184, and Cys186. Positions 172 to 186 (CSTTGKRKACKNCSC) are fe-S binding site A. [4Fe-4S] cluster is bound by residues Cys209, Cys212, Cys220, and Cys223. 2 short sequence motifs (cx2C motif) span residues 209 to 212 (CGNC) and 220 to 223 (CSTC). A fe-S binding site B region spans residues 209–223 (CGNCYLGDAFRCSTC).

This sequence belongs to the anamorsin family. In terms of assembly, monomer. Requires [2Fe-2S] cluster as cofactor. It depends on [4Fe-4S] cluster as a cofactor.

The protein localises to the cytoplasm. Its subcellular location is the mitochondrion intermembrane space. Its function is as follows. Component of the cytosolic iron-sulfur (Fe-S) protein assembly (CIA) machinery. Required for the maturation of extramitochondrial Fe-S proteins. Part of an electron transfer chain functioning in an early step of cytosolic Fe-S biogenesis, facilitating the de novo assembly of a [4Fe-4S] cluster on the cytosolic Fe-S scaffold complex. Electrons are transferred from NADPH via a FAD- and FMN-containing diflavin oxidoreductase. Together with the diflavin oxidoreductase, also required for the assembly of the diferric tyrosyl radical cofactor of ribonucleotide reductase (RNR), probably by providing electrons for reduction during radical cofactor maturation in the catalytic small subunit. In Drosophila ananassae (Fruit fly), this protein is Anamorsin homolog.